The following is a 492-amino-acid chain: Ketol-acid reductoisomerase (NADP(+)) (492 aa).

A KARI N-terminal Rossmann domain is found at 15–208; that stretch reads AQLGKCRFMA…GGHRAGVLEF (194 aa). NADP(+) contacts are provided by residues 45 to 48, arginine 68, arginine 76, serine 78, and 108 to 110; these read CGAQ and DKQ. The active site involves histidine 132. Residue glycine 158 coordinates NADP(+). 2 consecutive KARI C-terminal knotted domains span residues 209–344 and 345–485; these read SFVA…NAPQ and FEGK…MTDM. Mg(2+) contacts are provided by aspartate 217, glutamate 221, glutamate 389, and glutamate 393. Serine 414 contacts substrate.

This sequence belongs to the ketol-acid reductoisomerase family. It depends on Mg(2+) as a cofactor.

It carries out the reaction (2R)-2,3-dihydroxy-3-methylbutanoate + NADP(+) = (2S)-2-acetolactate + NADPH + H(+). It catalyses the reaction (2R,3R)-2,3-dihydroxy-3-methylpentanoate + NADP(+) = (S)-2-ethyl-2-hydroxy-3-oxobutanoate + NADPH + H(+). It participates in amino-acid biosynthesis; L-isoleucine biosynthesis; L-isoleucine from 2-oxobutanoate: step 2/4. Its pathway is amino-acid biosynthesis; L-valine biosynthesis; L-valine from pyruvate: step 2/4. Functionally, involved in the biosynthesis of branched-chain amino acids (BCAA). Catalyzes an alkyl-migration followed by a ketol-acid reduction of (S)-2-acetolactate (S2AL) to yield (R)-2,3-dihydroxy-isovalerate. In the isomerase reaction, S2AL is rearranged via a Mg-dependent methyl migration to produce 3-hydroxy-3-methyl-2-ketobutyrate (HMKB). In the reductase reaction, this 2-ketoacid undergoes a metal-dependent reduction by NADPH to yield (R)-2,3-dihydroxy-isovalerate. In Yersinia pestis bv. Antiqua (strain Antiqua), this protein is Ketol-acid reductoisomerase (NADP(+)).